The primary structure comprises 255 residues: tRNA pseudouridine synthase A (255 aa).

Asp43 acts as the Nucleophile in catalysis. Tyr94 contacts substrate.

This sequence belongs to the tRNA pseudouridine synthase TruA family.

It catalyses the reaction uridine(38/39/40) in tRNA = pseudouridine(38/39/40) in tRNA. Formation of pseudouridine at positions 38, 39 and 40 in the anticodon stem and loop of transfer RNAs. The chain is tRNA pseudouridine synthase A from Pyrobaculum islandicum (strain DSM 4184 / JCM 9189 / GEO3).